Reading from the N-terminus, the 125-residue chain is Snaclec B6 (125 aa).

3 cysteine pairs are disulfide-bonded: C2–C13, C30–C119, and C96–C111. The 112-residue stretch at 9-120 (HEGHCYKVFK…CNISQYFVCQ (112 aa)) folds into the C-type lectin domain. Residue N95 is glycosylated (N-linked (GlcNAc...) asparagine). A glycan (N-linked (GlcNAc...) asparagine) is linked at N112.

This sequence belongs to the snaclec family. As to quaternary structure, heterodimer; disulfide-linked. As to expression, expressed by the venom gland.

The protein localises to the secreted. Interferes with one step of hemostasis (modulation of platelet aggregation, or coagulation cascade, for example). The chain is Snaclec B6 from Macrovipera lebetinus (Levantine viper).